The following is a 514-amino-acid chain: 2-isopropylmalate synthase (514 aa).

Residues 5–267 form the Pyruvate carboxyltransferase domain; sequence VIIFDTTLRD…ETNIKHEEIH (263 aa). Mn(2+) contacts are provided by D14, H202, H204, and N238. The interval 392–514 is regulatory domain; that stretch reads KLNYLSVQSG…AEIKERIATV (123 aa).

The protein belongs to the alpha-IPM synthase/homocitrate synthase family. LeuA type 1 subfamily. In terms of assembly, homodimer. Mn(2+) is required as a cofactor.

It localises to the cytoplasm. It catalyses the reaction 3-methyl-2-oxobutanoate + acetyl-CoA + H2O = (2S)-2-isopropylmalate + CoA + H(+). It functions in the pathway amino-acid biosynthesis; L-leucine biosynthesis; L-leucine from 3-methyl-2-oxobutanoate: step 1/4. In terms of biological role, catalyzes the condensation of the acetyl group of acetyl-CoA with 3-methyl-2-oxobutanoate (2-ketoisovalerate) to form 3-carboxy-3-hydroxy-4-methylpentanoate (2-isopropylmalate). The polypeptide is 2-isopropylmalate synthase (Photobacterium profundum (strain SS9)).